A 115-amino-acid chain; its full sequence is Hydrogenase maturation factor HypA (115 aa).

His2 contacts Ni(2+). Residues Cys73, Cys76, Cys89, and Cys92 each coordinate Zn(2+).

This sequence belongs to the HypA/HybF family.

Involved in the maturation of [NiFe] hydrogenases. Required for nickel insertion into the metal center of the hydrogenase. The chain is Hydrogenase maturation factor HypA from Shewanella halifaxensis (strain HAW-EB4).